Consider the following 327-residue polypeptide: uncharacterized protein (327 aa).

In terms of domain architecture, S4 RNA-binding spans 12 to 79 (KRIDEFLAKE…LKKELDLEIE (68 aa)). The active site involves D136.

It belongs to the pseudouridine synthase RluA family.

The enzyme catalyses a uridine in RNA = a pseudouridine in RNA. This is an uncharacterized protein from Helicobacter pylori (strain J99 / ATCC 700824) (Campylobacter pylori J99).